The following is a 423-amino-acid chain: Adenylosuccinate synthetase (423 aa).

Residues 11 to 17 (GDEGKGK) and 39 to 41 (GHT) contribute to the GTP site. D12 (proton acceptor) is an active-site residue. 2 residues coordinate Mg(2+): D12 and G39. IMP is bound by residues 12-15 (DEGK), 37-40 (NAGH), T127, R141, Q223, T238, and R302. The active-site Proton donor is H40. Residue 298-304 (TTTGRSR) coordinates substrate. Residues R304, 330 to 332 (KLD), and 412 to 414 (SVG) contribute to the GTP site.

It belongs to the adenylosuccinate synthetase family. As to quaternary structure, homodimer. The cofactor is Mg(2+).

The protein resides in the cytoplasm. It carries out the reaction IMP + L-aspartate + GTP = N(6)-(1,2-dicarboxyethyl)-AMP + GDP + phosphate + 2 H(+). The protein operates within purine metabolism; AMP biosynthesis via de novo pathway; AMP from IMP: step 1/2. In terms of biological role, plays an important role in the de novo pathway of purine nucleotide biosynthesis. Catalyzes the first committed step in the biosynthesis of AMP from IMP. The protein is Adenylosuccinate synthetase of Methanococcoides burtonii (strain DSM 6242 / NBRC 107633 / OCM 468 / ACE-M).